Here is a 753-residue protein sequence, read N- to C-terminus: MEQRGWTLQCTAFAFFCVWCALNSVKAKRQFVNEWAAEIPGGQEAASAIAEELGYDLLGQIGSLENHYLFKHKSHPRRSRRSALHITKRLSDDDRVTWAEQQYEKERSKRSVQKDSALDLFNDPMWNQQWYLQDTRMTAALPKLDLHVIPVWEKGITGKGVVITVLDDGLEWNHTDIYANYDPEASYDFNDNDHDPFPRYDLTNENKHGTRCAGEIAMQANNHKCGVGVAYNSKVGGIRMLDGIVTDAIEASSIGFNPGHVDIYSASWGPNDDGKTVEGPGRLAQKAFEYGVKQGRQGKGSIFVWASGNGGRQGDNCDCDGYTDSIYTISISSASQQGLSPWYAEKCSSTLATSYSSGDYTDQRITSADLHNDCTETHTGTSASAPLAAGIFALALEANPNLTWRDMQHLVVWTSEYDPLASNPGWKKNGAGLMVNSRFGFGLLNAKALVDLADPRTWRNVPEKKECVVKDNNFEPRALKANGEVIVEIPTRACEGQENAIKSLEHVQFEATIEYSRRGDLHVTLTSAVGTSTVLLAERERDTSPNGFKNWDFMSVHTWGENPVGTWTLKITDMSGRMQNEGRIVNWKLILHGTSSQPEHMKQPRVYTSYNTVQNDRRGVEKMVNVVEKRPTQKSLNGNLLVPKNSSSSNVEGRRDEQVQGTPSKAMLRLLQSAFSKNALSKQSPKKSPSAKLSIPYESFYEALEKLNKPSKLEGSEDSLYSDYVDVFYNTKPYKHRDDRLLQALMDILNEEN.

An N-terminal signal peptide occupies residues 1-27; it reads MEQRGWTLQCTAFAFFCVWCALNSVKA. Residues 28-110 constitute a propeptide that is removed on maturation; the sequence is KRQFVNEWAA…QQYEKERSKR (83 aa). Residues 129-450 enclose the Peptidase S8 domain; sequence QWYLQDTRMT…FGLLNAKALV (322 aa). Catalysis depends on charge relay system residues D167 and H208. 2 disulfide bridges follow: C225-C374 and C317-C347. S382 acts as the Charge relay system in catalysis. N401 carries an N-linked (GlcNAc...) asparagine glycan. The P/Homo B domain maps to 460–597; sequence NVPEKKECVV…KLILHGTSSQ (138 aa). Residues C467 and C494 are joined by a disulfide bond. Over residues 633-651 the composition is skewed to polar residues; the sequence is QKSLNGNLLVPKNSSSSNV. The tract at residues 633–663 is disordered; it reads QKSLNGNLLVPKNSSSSNVEGRRDEQVQGTP. N645 is a glycosylation site (N-linked (GlcNAc...) asparagine).

This sequence belongs to the peptidase S8 family. Furin subfamily. Ca(2+) serves as cofactor.

It localises to the cytoplasmic vesicle. The protein localises to the secretory vesicle. The catalysed reaction is Release of protein hormones, neuropeptides and renin from their precursors, generally by hydrolysis of -Lys-Arg-|- bonds.. Its function is as follows. Involved in the processing of hormone and other protein precursors at sites comprised of pairs of basic amino acid residues. Substrates include POMC, renin, enkephalin, dynorphin, somatostatin, insulin and AGRP. This Mus musculus (Mouse) protein is Neuroendocrine convertase 1 (Pcsk1).